Here is a 329-residue protein sequence, read N- to C-terminus: 1-phosphatidylinositol phosphodiesterase (329 aa).

The first 31 residues, 1-31, serve as a signal peptide directing secretion; that stretch reads MSNKKLILKLFICSTIFITFVFALHDKRVVA. Residues 51-194 form the PI-PLC X-box domain; it reads NIPLARISIP…ARGKIVLLKR (144 aa). Histidine 63 acts as the Proton acceptor in catalysis. The active-site Proton donor is histidine 113.

Its subcellular location is the secreted. It carries out the reaction a 1,2-diacyl-sn-glycero-3-phospho-(1D-myo-inositol) = 1D-myo-inositol 1,2-cyclic phosphate + a 1,2-diacyl-sn-glycerol. In terms of biological role, cleaves glycosylphosphatidylinositol (GPI) and phosphatidylinositol (PI) anchors but not PI phosphates. This chain is 1-phosphatidylinositol phosphodiesterase, found in Bacillus thuringiensis.